The following is a 225-amino-acid chain: Recoverin family protein DDB_G0274781 (225 aa).

A compositionally biased stretch (low complexity) spans 1-13 (MGNKQGKSPNNSK). Residues 1–20 (MGNKQGKSPNNSKGGKKYKI) form a disordered region. Gly-2 is lipidated: N-myristoyl glycine. 3 consecutive EF-hand domains span residues 78 to 113 (DNSPFGDRLFDLLDTNKDNTVDLQEFISGLSILCKG), 114 to 149 (TAEEKLELSFKAYDIDGNGYITKSELSQMFQQAWIS), and 174 to 209 (MAQIFADGAFSSLDVNGDGKLSFNEFKQFAMSHPKI). Asp-91, Asn-93, Asp-95, Thr-97, Glu-102, Asp-127, Asp-129, Asn-131, Tyr-133, Glu-138, Asp-187, Asn-189, Asp-191, Lys-193, and Glu-198 together coordinate Ca(2+).

It belongs to the recoverin family.

The protein is Recoverin family protein DDB_G0274781 of Dictyostelium discoideum (Social amoeba).